The sequence spans 253 residues: ER membrane protein complex subunit 3 (253 aa).

A run of 3 helical transmembrane segments spans residues 10–30 (WVLL…QYIM), 126–146 (FIPQ…FILM), and 176–196 (SISW…LIGL).

This sequence belongs to the EMC3 family. As to quaternary structure, component of the ER membrane protein complex (EMC), which is composed of EMC1, EMC2, EMC3, EMC4, EMC5 and EMC6.

It is found in the endoplasmic reticulum membrane. In terms of biological role, the EMC seems to be required for efficient folding of proteins in the endoplasmic reticulum (ER). The sequence is that of ER membrane protein complex subunit 3 (AIM27) from Saccharomyces cerevisiae (strain RM11-1a) (Baker's yeast).